A 609-amino-acid chain; its full sequence is MDDQNKNLILATALSFLVILVWFILFPPPEQTEAPATEIATTNGTAVQTPTAAATEGGAGEVPALDSAAPTQAEAPRVQIDTPRLKGSVSLLGGRIDELSLKDYRVSLDEDAEIVEMLTPAGSTSAYYALYGWAPGAGLNAADVPGPLTEWSLESGDTLSVGTPVTLSWSNGSGVTFRRTLAVDEDYMFTVTQSVENGSAAPIGAAPYGILARHGIGEDADLPGLKNFFILHEGVVAMNDGTLSEIDYKDVRKFDIDPNEGAQAEVFQNKSDGWIGFTDHYWMATLIPGSGTAFKSAAKYDARRKIYQAETVLPTMSVAPGESAEVTTRLFAGAKEWESIRAYQQDGVQKFLDSIDWGWFFFLTKPIFWLLHQINGLIGNMGWSIIGLTLIIKAIVFPLALKSYVSMAKMKELQPQMEALKEAAGDDRQKMQQGMMELYKKEKVNPAAGCLPILLQIPIFFSLYKVIFVTIELRQAPWFGPFRDLSMPDPTSIMNFFGWLPWAGPEAGSLTATILIGILPLLLGISMWLQQKLNPAPTDPTQAMIFAWMPWVFMFMLGSFASGLVVYWIANNTITFTQQYIIMRSHGYKPDVFGNIKSGFARRAKADKK.

5 helical membrane passes run 8-28, 381-401, 451-471, 509-529, and 545-565; these read LILATALSFLVILVWFILFPP, MGWSIIGLTLIIKAIVFPLAL, LPILLQIPIFFSLYKVIFVTI, SLTATILIGILPLLLGISMWL, and IFAWMPWVFMFMLGSFASGLV.

This sequence belongs to the OXA1/ALB3/YidC family. Type 1 subfamily. As to quaternary structure, interacts with the Sec translocase complex via SecD. Specifically interacts with transmembrane segments of nascent integral membrane proteins during membrane integration.

It localises to the cell inner membrane. In terms of biological role, required for the insertion and/or proper folding and/or complex formation of integral membrane proteins into the membrane. Involved in integration of membrane proteins that insert both dependently and independently of the Sec translocase complex, as well as at least some lipoproteins. Aids folding of multispanning membrane proteins. The chain is Membrane protein insertase YidC from Ruegeria pomeroyi (strain ATCC 700808 / DSM 15171 / DSS-3) (Silicibacter pomeroyi).